The following is a 933-amino-acid chain: Protein translocase subunit SecA (933 aa).

ATP is bound by residues glutamine 87, 105–109 (GEGKT), and aspartate 515. Disordered stretches follow at residues 567-588 (ESRRIDNQLRGRSGRQGDPGSS), 840-861 (DVEAVEEQRRQEAERMQMRHAA), and 880-933 (AAAE…CGKL). Positions 845–856 (EEQRRQEAERMQ) are enriched in basic and acidic residues. Low complexity predominate over residues 880–897 (AAAEGDSAPTGGAQQQSA). Positions 905–914 (VAREGPKVGR) are enriched in basic and acidic residues. Cysteine 918, cysteine 920, cysteine 929, and cysteine 930 together coordinate Zn(2+). Over residues 924–933 (KKYKHCCGKL) the composition is skewed to basic residues.

Belongs to the SecA family. Monomer and homodimer. Part of the essential Sec protein translocation apparatus which comprises SecA, SecYEG and auxiliary proteins SecDF-YajC and YidC. Zn(2+) serves as cofactor.

It localises to the cell inner membrane. It is found in the cytoplasm. The catalysed reaction is ATP + H2O + cellular proteinSide 1 = ADP + phosphate + cellular proteinSide 2.. Functionally, part of the Sec protein translocase complex. Interacts with the SecYEG preprotein conducting channel. Has a central role in coupling the hydrolysis of ATP to the transfer of proteins into and across the cell membrane, serving both as a receptor for the preprotein-SecB complex and as an ATP-driven molecular motor driving the stepwise translocation of polypeptide chains across the membrane. This chain is Protein translocase subunit SecA, found in Halorhodospira halophila (strain DSM 244 / SL1) (Ectothiorhodospira halophila (strain DSM 244 / SL1)).